The chain runs to 133 residues: MTLNLCVLTPNRIVWDSDVKEIILSTNSGQVGILPNHAPLAMALDIGILRIRLNDQWLTMALMGGFARIGNNEITVLVNDAEKGSDIDPQEAQQTLEIAEANLKEAKGKRQTIEANLALRRARTRVESINMIS.

Belongs to the ATPase epsilon chain family. F-type ATPases have 2 components, CF(1) - the catalytic core - and CF(0) - the membrane proton channel. CF(1) has five subunits: alpha(3), beta(3), gamma(1), delta(1), epsilon(1). CF(0) has three main subunits: a, b and c.

It localises to the plastid. The protein localises to the chloroplast thylakoid membrane. Produces ATP from ADP in the presence of a proton gradient across the membrane. In Lotus japonicus (Lotus corniculatus var. japonicus), this protein is ATP synthase epsilon chain, chloroplastic.